Reading from the N-terminus, the 388-residue chain is Succinate--CoA ligase [ADP-forming] subunit beta (388 aa).

In terms of domain architecture, ATP-grasp spans 9–244 (KEILRKYNVP…LDEEDPAEIE (236 aa)). ATP-binding positions include Lys46, 53-55 (GRG), Glu99, Ala102, and Glu107. Mg(2+) is bound by residues Asn199 and Asp213. Substrate-binding positions include Asn264 and 321–323 (GIM).

Belongs to the succinate/malate CoA ligase beta subunit family. Heterotetramer of two alpha and two beta subunits. Mg(2+) serves as cofactor.

It catalyses the reaction succinate + ATP + CoA = succinyl-CoA + ADP + phosphate. It carries out the reaction GTP + succinate + CoA = succinyl-CoA + GDP + phosphate. Its pathway is carbohydrate metabolism; tricarboxylic acid cycle; succinate from succinyl-CoA (ligase route): step 1/1. Succinyl-CoA synthetase functions in the citric acid cycle (TCA), coupling the hydrolysis of succinyl-CoA to the synthesis of either ATP or GTP and thus represents the only step of substrate-level phosphorylation in the TCA. The beta subunit provides nucleotide specificity of the enzyme and binds the substrate succinate, while the binding sites for coenzyme A and phosphate are found in the alpha subunit. The protein is Succinate--CoA ligase [ADP-forming] subunit beta of Ralstonia pickettii (strain 12J).